The chain runs to 250 residues: Cell division protein ZapD (250 aa).

This sequence belongs to the ZapD family. Interacts with FtsZ.

It is found in the cytoplasm. Functionally, cell division factor that enhances FtsZ-ring assembly. Directly interacts with FtsZ and promotes bundling of FtsZ protofilaments, with a reduction in FtsZ GTPase activity. This is Cell division protein ZapD from Bordetella petrii (strain ATCC BAA-461 / DSM 12804 / CCUG 43448).